The primary structure comprises 203 residues: Protein shisa-like-1a (203 aa).

The first 25 residues, 1–25, serve as a signal peptide directing secretion; the sequence is MIMNGRWSFNTLAIIFILLSTAALS. Topologically, residues 26-97 are extracellular; it reads AHFRVCEPYS…SDSFAHNNYT (72 aa). N-linked (GlcNAc...) asparagine glycans are attached at residues asparagine 53, asparagine 63, asparagine 72, asparagine 83, and asparagine 95. A helical transmembrane segment spans residues 98–118; it reads ALIGVWIYGFFVMVLLALDFL. The Cytoplasmic segment spans residues 119 to 203; that stretch reads YYSAMNYELC…LLSFQTSTAW (85 aa). Residues 157 to 191 form a disordered region; the sequence is ELNTGPGLSQQQQLHLHHHHHHHHPRHSLRGDTQS. Over residues 161-170 the composition is skewed to low complexity; that stretch reads GPGLSQQQQL. A compositionally biased stretch (basic residues) spans 171 to 184; it reads HLHHHHHHHHPRHS.

Belongs to the shisa family.

It is found in the membrane. The sequence is that of Protein shisa-like-1a (shisal1a) from Danio rerio (Zebrafish).